A 285-amino-acid polypeptide reads, in one-letter code: 2-methoxy-6-polyprenyl-1,4-benzoquinol methylase, mitochondrial (285 aa).

The transit peptide at 1-30 (MKGATNLFKSMRKPTNVGNFRQFSVNQVNS) directs the protein to the mitochondrion. S-adenosyl-L-methionine-binding positions include Thr-106, Asp-126, 156 to 157 (NA), and Ser-173.

This sequence belongs to the class I-like SAM-binding methyltransferase superfamily. MenG/UbiE family. In terms of assembly, component of a multi-subunit COQ enzyme complex.

It localises to the mitochondrion inner membrane. The catalysed reaction is a 2-methoxy-6-(all-trans-polyprenyl)benzene-1,4-diol + S-adenosyl-L-methionine = a 5-methoxy-2-methyl-3-(all-trans-polyprenyl)benzene-1,4-diol + S-adenosyl-L-homocysteine + H(+). It functions in the pathway cofactor biosynthesis; ubiquinone biosynthesis. Methyltransferase required for the conversion of 2-polyprenyl-6-methoxy-1,4-benzoquinol (DDMQH2) to 2-polyprenyl-3-methyl-6-methoxy-1,4-benzoquinol (DMQH2). The chain is 2-methoxy-6-polyprenyl-1,4-benzoquinol methylase, mitochondrial from Caenorhabditis elegans.